Reading from the N-terminus, the 2187-residue chain is Nascent polypeptide-associated complex subunit alpha, muscle-specific form (2187 aa).

Disordered regions lie at residues 1 to 20 (MPGE…PQPQ), 32 to 73 (LKVA…STPF), and 172 to 196 (IPPL…KGTA). Positions 9 to 20 (VPATEQELPQPQ) are enriched in polar residues. A compositionally biased stretch (polar residues) spans 178–192 (KTSTSQVPSQGTLNL). Asymmetric dimethylarginine is present on Arg-247. Disordered regions lie at residues 335 to 370 (DSGA…LSPK), 579 to 611 (NTVS…SPLV), 738 to 835 (PKGS…PKDT), 884 to 1847 (KETL…PVEK), and 1892 to 2053 (PEAV…KAMS). Polar residues predominate over residues 347-369 (SAVTNELCSPPGSSNVAGTSLSP). Thr-590 is modified (phosphothreonine). Composition is skewed to polar residues over residues 599-609 (AKNTAPSTTSP), 818-835 (VTPT…PKDT), and 887-905 (LATS…TPKS). Ser-822 carries the post-translational modification Phosphoserine. The span at 941 to 951 (PHVPPTSPPKS) shows a compositional bias: pro residues. Residues 976-998 (TPTYPKKSPKPAASKKTPATPSP) show a composition bias toward low complexity. Residues 1106–1122 (TPQNATPNESLAASSQK) show a composition bias toward polar residues. A phosphoserine mark is found at Ser-1174 and Ser-1177. Positions 1174–1195 (SPLSPKKASKTAAPKEAPATPS) are enriched in low complexity. The residue at position 1364 (Thr-1364) is a Phosphothreonine. A phosphoserine mark is found at Ser-1368 and Ser-1392. Thr-1398 is modified (phosphothreonine). Ser-1400 and Ser-1423 each carry phosphoserine. Residues 1429-1440 (VTPSSKKLSQTV) are compositionally biased toward polar residues. Low complexity predominate over residues 1489 to 1504 (SPSSPKKAPKTAAPPS). Ser-1492 is subject to Phosphoserine. The segment covering 1609–1631 (PVTTSLAQTAPPSLQKAPSTTIP) has biased composition (polar residues). Composition is skewed to low complexity over residues 1636–1670 (AAPA…TAPK) and 1714–1727 (SSPP…KRAS). The segment covering 1762–1772 (ACSTGTTTPQA) has biased composition (polar residues). Composition is skewed to low complexity over residues 1806 to 1823 (KSPG…CPDP) and 1892 to 1914 (PEAV…LAPS). The PXLXP motif lies at 1950 to 1954 (PPLIP). A compositionally biased stretch (pro residues) spans 1973–1983 (APKPAGTPAPA). Positions 2001 to 2014 (SDSDESVPELEEQD) are enriched in acidic residues. Ser-2015 is modified (phosphoserine; by ILK1). Positions 2016 to 2029 (TQTATQQAQLAAAA) are enriched in low complexity. A required for DNA-binding region spans residues 2041–2052 (QSRSEKKARKAM). In terms of domain architecture, NAC-A/B spans 2042 to 2107 (SRSEKKARKA…AKIEDLSQQA (66 aa)). The residue at position 2104 (Ser-2104) is a Phosphoserine. Position 2114 is an N6-acetyllysine; alternate (Lys-2114). A Glycyl lysine isopeptide (Lys-Gly) (interchain with G-Cter in SUMO2); alternate cross-link involves residue Lys-2114. Thr-2131 bears the Phosphothreonine; by GSK3-beta mark. Residue Thr-2133 is modified to Phosphothreonine. Phosphoserine occurs at positions 2138, 2158, 2163, and 2175. The region spanning 2148–2185 (VEVKDIELVMSQANVSRAKAVRALKNNSNDIVNAIMEL) is the UBA domain.

This sequence belongs to the NAC-alpha family. Interacts (via PXLXP motif) with the muscle-restricted histone methyltransferase SMYD1 (via MYND-type zinc finger). Phosphorylation of Ser-2015 by ILK during cell adhesion may promote nuclear localization. Phosphorylation of Thr-2131 by GSK3B may promote proteasome mediated degradation. In terms of tissue distribution, specifically expressed in heart and skeletal muscle: it is present in differentiated myotubes but not in myoblasts.

It is found in the cytoplasm. It localises to the nucleus. Cardiac- and muscle-specific transcription factor. May act to regulate the expression of genes involved in the development of myotubes. Plays a critical role in ventricular cardiomyocyte expansion and regulates postnatal skeletal muscle growth and regeneration. Involved in the organized assembly of thick and thin filaments of myofibril sarcomeres. This Mus musculus (Mouse) protein is Nascent polypeptide-associated complex subunit alpha, muscle-specific form (Naca).